A 320-amino-acid polypeptide reads, in one-letter code: Malate dehydrogenase (320 aa).

Residues 10–15 (GSGMIG) and aspartate 34 each bind NAD(+). Substrate-binding residues include arginine 83 and arginine 89. Residues asparagine 96 and 119 to 121 (ITN) contribute to the NAD(+) site. Asparagine 121 and arginine 152 together coordinate substrate. Catalysis depends on histidine 176, which acts as the Proton acceptor.

It belongs to the LDH/MDH superfamily. MDH type 3 family.

The enzyme catalyses (S)-malate + NAD(+) = oxaloacetate + NADH + H(+). Functionally, catalyzes the reversible oxidation of malate to oxaloacetate. This chain is Malate dehydrogenase, found in Brucella canis (strain ATCC 23365 / NCTC 10854 / RM-666).